Here is a 236-residue protein sequence, read N- to C-terminus: Protein-L-isoaspartate O-methyltransferase 1 (236 aa).

Ser-85 is a catalytic residue.

It belongs to the methyltransferase superfamily. L-isoaspartyl/D-aspartyl protein methyltransferase family.

It is found in the cytoplasm. It catalyses the reaction [protein]-L-isoaspartate + S-adenosyl-L-methionine = [protein]-L-isoaspartate alpha-methyl ester + S-adenosyl-L-homocysteine. Its function is as follows. Catalyzes the methyl esterification of L-isoaspartyl residues in peptides and proteins that result from spontaneous decomposition of normal L-aspartyl and L-asparaginyl residues. It plays a role in the repair and/or degradation of damaged proteins. In Polaromonas sp. (strain JS666 / ATCC BAA-500), this protein is Protein-L-isoaspartate O-methyltransferase 1.